The primary structure comprises 393 residues: EPITTGLKTYPSVLNKKGTYTQSSQLTITESEVGSSKIYCEVRRGESVWIKEIPDCKGDKVHPTVILTQSSSEEITSRRFATVLCSIIDFHPESITVSWLKDGQHMESGFVTSPTCGVNGTFSATSRLTVPAREWFTNKVYTCQVSHQGVTQSRNITGSQVPCSCNDPVIKLLPPSIEQVLLEATVTLNCIVSNAPYGVNVSWTQEQKSLKSEIAVQPGEDADSVISTVNISTQAWLSGAEFYCVVNHQDLPTPLRASIHKEEVKDLREPSVSILLSPAEDVSAQRFLSLTCLVRGFSPREIFVKWTINDKSVNPGNYKNTEVMAENDNSSYFIYSLLSIAAEEWASGASYSCVVGHEAIPLKIINRTVNKSSGKPSFVNISLALLDTVNSCQ.

Ig-like domains are found at residues 63–157 (PTVI…RNIT), 168–260 (PVIK…ASIH), and 270–370 (PSVS…RTVN). N-linked (GlcNAc...) asparagine glycosylation is found at asparagine 119, asparagine 155, asparagine 200, asparagine 230, asparagine 329, asparagine 366, asparagine 370, and asparagine 380.

The chain is Ig heavy chain C region from Heterodontus francisci (Horn shark).